The chain runs to 720 residues: Connector enhancer of kinase suppressor of ras 1 (720 aa).

An SAM domain is found at 7–70; it reads WTPGKVATWL…LGGVEQLQAL (64 aa). The region spanning 78-164 is the CRIC domain; that stretch reads NLQSLTEGLL…QVLHEDGPAA (87 aa). Residues 196–285 enclose the PDZ domain; the sequence is KAVLEQVQLD…GLSLVLKKIP (90 aa). Residues 285–390 are disordered; sequence PIPETPPQTP…RKKSKGLATR (106 aa). Residues 304-317 show a composition bias toward low complexity; that stretch reads RSPSLSLAPLSPRA. 2 positions are modified to phosphoserine: S307 and S314. The span at 348-359 shows a compositional bias: pro residues; sequence EPLPIPPEPPAI. Over residues 379-390 the composition is skewed to basic residues; sequence VGRKKSKGLATR. Residues 403-502 enclose the PH domain; the sequence is RPDCDGWLLL…WVRHLITCIS (100 aa). Residues 504–573 form a disordered region; sequence YQSPGRAPPP…TSFGSLTDSS (70 aa). Acidic residues predominate over residues 518-530; sequence CYSETEAEDPDDE. Residues 533 to 546 show a composition bias toward low complexity; it reads SHSASPSPAQAGSP. A compositionally biased stretch (polar residues) spans 553 to 571; it reads PAATPTQRSPRTSFGSLTD. Positions 615–646 form a coiled coil; the sequence is QLNERVHRVRALQSTLKAKLQELQVLEEVLGD. The tract at residues 676 to 720 is disordered; it reads QAEGSSHILTSDSTEQSPHSLPSDPEEHSHLCPLTSESSLRPPDL. Residues 678-695 show a composition bias toward polar residues; the sequence is EGSSHILTSDSTEQSPHS.

Belongs to the CNKSR family. As to quaternary structure, interacts with RHO and RALGDS. Phosphorylated on tyrosine.

It is found in the cytoplasm. The protein localises to the membrane. Its function is as follows. May function as an adapter protein or regulator of Ras signaling pathways. This Homo sapiens (Human) protein is Connector enhancer of kinase suppressor of ras 1 (CNKSR1).